Here is a 622-residue protein sequence, read N- to C-terminus: Leucine-rich repeat-containing protein 70 (622 aa).

Residues 1 to 31 (MCGLQFSLPCLRLFLVVTCYLLLLLHKEILG) form the signal peptide. Residues 32 to 60 (CSSVCQLCTGRQINCRNLGLSSIPKNFPE) enclose the LRRNT domain. LRR repeat units lie at residues 61 to 82 (STVF…ELTG), 85 to 106 (SLVA…AFVQ), 109 to 130 (HLYF…IFKG), 133 to 154 (NLRN…VFND), 157 to 178 (SVQY…TFVG), 181 to 202 (ALRI…GFQH), 205 to 226 (NLAC…AFEV), 229 to 250 (SLRR…AFKG), 253 to 274 (NLEY…GFSG), 277 to 298 (NLKH…TFSL), 301 to 322 (NLIY…TFEN), and 326 to 347 (SLKI…VLKP). Asparagine 215 carries an N-linked (GlcNAc...) asparagine glycan. Asparagine 266 carries N-linked (GlcNAc...) asparagine glycosylation. Asparagine 331 and asparagine 400 each carry an N-linked (GlcNAc...) asparagine glycan. In terms of domain architecture, LRRCT spans 359 to 406 (NPWECNCKLLGLRDWLASSAITLNIYCQNPPSMRGRALRYINITNCVT). The helical transmembrane segment at 527-547 (AFDILLAFFILACVLIIFLIY) threads the bilayer.

As to expression, expressed at low levels in many tissues, including smooth muscle, brain, uterus, pancreas, cartilage, adipose, spleen and testis.

It localises to the membrane. Its function is as follows. Renders cells highly sensitive to the activation by cytokines and lipopolysaccharide (LPS). This Homo sapiens (Human) protein is Leucine-rich repeat-containing protein 70 (LRRC70).